Consider the following 409-residue polypeptide: 3-isopropylmalate dehydrogenase 1, chloroplastic (409 aa).

The N-terminal 37 residues, 1 to 37 (MAAFLQTNISLNAIKIVPGKYSSLTDHQFRAPYRIRC), are a transit peptide targeting the chloroplast. Ser74 is modified (phosphoserine). Position 118–133 (118–133 (IGGYKWDKNEKHLRPE)) interacts with NAD(+). Substrate contacts are provided by Arg140, Arg150, and Arg178. Asn238 lines the NAD(+) pocket. Asp268 contributes to the substrate binding site. Mg(2+) is bound at residue Asp268. Asn269 serves as a coordination point for NAD(+). Residues Asp292 and Asp296 each contribute to the Mg(2+) site. Residue 322–338 (EPIHGSAPDIAGQDKAN) participates in NAD(+) binding.

The protein belongs to the isocitrate and isopropylmalate dehydrogenases family. As to quaternary structure, homodimer. Mg(2+) serves as cofactor. The cofactor is Mn(2+). Highly expressed in seedlings, leaves, stems and roots and, to a lower extent, in flowers, pollen and siliques.

It localises to the plastid. The protein resides in the chloroplast stroma. The catalysed reaction is (2R,3S)-3-isopropylmalate + NAD(+) = 4-methyl-2-oxopentanoate + CO2 + NADH. The protein operates within amino-acid biosynthesis; L-leucine biosynthesis; L-leucine from 3-methyl-2-oxobutanoate: step 3/4. It functions in the pathway secondary metabolite biosynthesis. With respect to regulation, regulated by a thiol-based redox modification; oxidation by CuCl(2) leads to a decreased activity. Involved in both glucosinolate and leucine biosynthesis; catalyzes the oxidative decarboxylation step in both leucine biosynthesis (primary metabolism) and methionine chain elongation of glucosinolates (specialized metabolism). Catalyzes the oxidation of 3-carboxy-2-hydroxy-4-methylpentanoate (3-isopropylmalate, 3-IPM) to 3-carboxy-4-methyl-2-oxopentanoate. The product decarboxylates to 4-methyl-2 oxopentanoate. Required during pollen development and involved in embryo sac development. More active on 3-isopropylmalate and NAD(+) than towards D-malate. The chain is 3-isopropylmalate dehydrogenase 1, chloroplastic from Arabidopsis thaliana (Mouse-ear cress).